Here is a 418-residue protein sequence, read N- to C-terminus: MAGPFSRLLSARPGLRLLALAGAGSLTAGILLRPESVGAAAAERRRLYPPSAEYPDLRKHNNCMASHLTPAVYARLCDKTTPTGWTLDQCIQTGVDNPGHPFIKTVGMVAGDEETYEVFAELFDPVIQERHNGYDPRTMKHTTDLDASKIRSGYFDERYVLSSRVRTGRSIRGLSLPPACTRAERREVERVVVDALSGLKGDLAGRYYRLSEMTEAEQQQLIDDHFLFDKPVSPLLTAAGMARDWPDARGIWHNNEKSFLIWVNEEDHTRVISMEKGGNMKRVFERFCRGLKEVEKLIQERGWEFMWNERLGYILTCPSNLGTGLRAGVHIKLPLLSKDNRFPKILENLRLQKRGTGGVDTAATGSVFDISNLDRLGKSEVELVQLVIDGVNYLIDCERRLERGQDIRIPPPLVHSKH.

The N-terminal 39 residues, 1–39, are a transit peptide targeting the mitochondrion; it reads MAGPFSRLLSARPGLRLLALAGAGSLTAGILLRPESVGA. The cardiolipin-binding stretch occupies residues 40 to 64; the sequence is AAAERRRLYPPSAEYPDLRKHNNCM. The region spanning 46–132 is the Phosphagen kinase N-terminal domain; sequence RLYPPSAEYP…FDPVIQERHN (87 aa). Ser152 is modified (phosphoserine). One can recognise a Phosphagen kinase C-terminal domain in the interval 159–401; the sequence is YVLSSRVRTG…NYLIDCERRL (243 aa). 162–166 is a binding site for ATP; the sequence is SSRVR. Ser197 bears the Phosphoserine mark. Thr214 bears the Phosphothreonine mark. His225 is an ATP binding site. A Phosphoserine modification is found at Ser233. Residues Arg270, Arg326, and 354–359 contribute to the ATP site; that span reads RGTGGV. Phosphothreonine is present on Thr356. Ser366 carries the phosphoserine modification. Asp369 serves as a coordination point for ATP.

It belongs to the ATP:guanido phosphotransferase family. In terms of assembly, exists as an octamer composed of four MTCK homodimers.

The protein localises to the mitochondrion inner membrane. It catalyses the reaction creatine + ATP = N-phosphocreatine + ADP + H(+). Reversibly catalyzes the transfer of phosphate between ATP and various phosphogens (e.g. creatine phosphate). Creatine kinase isoenzymes play a central role in energy transduction in tissues with large, fluctuating energy demands, such as skeletal muscle, heart, brain and spermatozoa. The chain is Creatine kinase U-type, mitochondrial (Ckmt1) from Mus musculus (Mouse).